An 87-amino-acid polypeptide reads, in one-letter code: U3-theraphotoxin-Hhn1h (87 aa).

Positions 1–24 are cleaved as a signal peptide; sequence MVNMKASMFLTFAGLVLLFVVCYA. Positions 25-52 are excised as a propeptide; sequence SESEEKEFPKEMLSSIFAVDNDSKQEER. Intrachain disulfides connect C54/C67, C61/C72, and C66/C79.

The protein belongs to the neurotoxin 10 (Hwtx-1) family. 51 (Hntx-8) subfamily. Hntx-8 sub-subfamily. As to expression, expressed by the venom gland.

It is found in the secreted. Ion channel inhibitor. The sequence is that of U3-theraphotoxin-Hhn1h from Cyriopagopus hainanus (Chinese bird spider).